The sequence spans 316 residues: Acetaldehyde dehydrogenase 3 (316 aa).

12-15 contributes to the NAD(+) binding site; it reads SGNI. Cysteine 132 serves as the catalytic Acyl-thioester intermediate. NAD(+) is bound by residues 163–171 and asparagine 289; that span reads SAGPGTRAN.

This sequence belongs to the acetaldehyde dehydrogenase family.

The catalysed reaction is acetaldehyde + NAD(+) + CoA = acetyl-CoA + NADH + H(+). The polypeptide is Acetaldehyde dehydrogenase 3 (mhpF) (Comamonas testosteroni (Pseudomonas testosteroni)).